The chain runs to 112 residues: Replication initiation control protein YabA (112 aa).

Zn(2+) contacts are provided by His85, Cys87, Cys101, and Cys104.

It belongs to the YabA family. As to quaternary structure, homotetramer. Interacts with both DnaA and DnaN, acting as a bridge between these two proteins. Zn(2+) serves as cofactor.

The protein resides in the cytoplasm. It is found in the nucleoid. In terms of biological role, involved in control of chromosome replication initiation. Inhibits the cooperative binding of DnaA to the oriC region, thus negatively regulating initiation of chromosome replication. Inhibits the ability of DnaA-ATP to form a helix on DNA; does not disassemble preformed DnaA-DNA helices. Decreases the residence time of DnaA on the chromosome at its binding sites (oriC, replication forks and promoter-binding sites). Tethers DnaA to the replication machinery via the DNA polymerase beta sliding clamp subunit (dnaN). Associates with oriC and other DnaA targets on the chromosome in a DnaA-dependent manner. The chain is Replication initiation control protein YabA from Lacticaseibacillus casei (strain BL23) (Lactobacillus casei).